A 216-amino-acid chain; its full sequence is Pyridoxine/pyridoxamine 5'-phosphate oxidase (216 aa).

Substrate-binding positions include 12–15 (RREY) and lysine 70. FMN is bound by residues 65 to 70 (RLVLLK), 80 to 81 (YT), arginine 86, lysine 87, and glutamine 109. Substrate is bound by residues tyrosine 127, arginine 131, and serine 135. Residues 144-145 (QS) and tryptophan 189 each bind FMN. 195–197 (RMH) serves as a coordination point for substrate. Arginine 199 is an FMN binding site.

The protein belongs to the pyridoxamine 5'-phosphate oxidase family. Homodimer. FMN is required as a cofactor.

The catalysed reaction is pyridoxamine 5'-phosphate + O2 + H2O = pyridoxal 5'-phosphate + H2O2 + NH4(+). It catalyses the reaction pyridoxine 5'-phosphate + O2 = pyridoxal 5'-phosphate + H2O2. The protein operates within cofactor metabolism; pyridoxal 5'-phosphate salvage; pyridoxal 5'-phosphate from pyridoxamine 5'-phosphate: step 1/1. It functions in the pathway cofactor metabolism; pyridoxal 5'-phosphate salvage; pyridoxal 5'-phosphate from pyridoxine 5'-phosphate: step 1/1. In terms of biological role, catalyzes the oxidation of either pyridoxine 5'-phosphate (PNP) or pyridoxamine 5'-phosphate (PMP) into pyridoxal 5'-phosphate (PLP). The polypeptide is Pyridoxine/pyridoxamine 5'-phosphate oxidase (Sodalis glossinidius (strain morsitans)).